Consider the following 194-residue polypeptide: CASP-like protein 2C2 (194 aa).

Over M1 to A27 the chain is Cytoplasmic. The chain crosses the membrane as a helical span at residues M28–V48. Topologically, residues Q49–Q58 are extracellular. A helical membrane pass occupies residues A59–A79. Over R80–A113 the chain is Cytoplasmic. Residues Y114–V134 form a helical membrane-spanning segment. Over E135–Q152 the chain is Extracellular. Residues A153 to F173 form a helical membrane-spanning segment. Topologically, residues S174–V194 are cytoplasmic.

It belongs to the Casparian strip membrane proteins (CASP) family. As to quaternary structure, homodimer and heterodimers.

It is found in the cell membrane. The chain is CASP-like protein 2C2 from Sorghum bicolor (Sorghum).